Consider the following 91-residue polypeptide: Sec-independent protein translocase protein TatA (91 aa).

Residues 1-21 (MGSMSVWHWVIVAVVVMLLFG) form a helical membrane-spanning segment. The segment at 42–91 (GMADDETQPTNTTSVPPVGPNDPVRTLPHQGAPGTAPQQTHVPAGDHKAV) is disordered.

The protein belongs to the TatA/E family. In terms of assembly, the Tat system comprises two distinct complexes: a TatABC complex, containing multiple copies of TatA, TatB and TatC subunits, and a separate TatA complex, containing only TatA subunits. Substrates initially bind to the TatABC complex, which probably triggers association of the separate TatA complex to form the active translocon.

The protein localises to the cell inner membrane. In terms of biological role, part of the twin-arginine translocation (Tat) system that transports large folded proteins containing a characteristic twin-arginine motif in their signal peptide across membranes. TatA could form the protein-conducting channel of the Tat system. The sequence is that of Sec-independent protein translocase protein TatA from Methylorubrum populi (strain ATCC BAA-705 / NCIMB 13946 / BJ001) (Methylobacterium populi).